We begin with the raw amino-acid sequence, 478 residues long: Puromycin-sensitive aminopeptidase-like protein (478 aa).

Substrate-binding positions include glutamate 180 and 316-320 (GAMEN). Zn(2+) is bound at residue histidine 352. Catalysis depends on glutamate 353, which acts as the Proton acceptor. 2 residues coordinate Zn(2+): histidine 356 and glutamate 375.

It belongs to the peptidase M1 family. Requires Zn(2+) as cofactor.

Its function is as follows. Aminopeptidase with broad substrate specificity to several peptides. This Homo sapiens (Human) protein is Puromycin-sensitive aminopeptidase-like protein (NPEPPSL1).